The following is an 86-amino-acid chain: Co-chaperonin GroES (86 aa).

This sequence belongs to the GroES chaperonin family. Heptamer of 7 subunits arranged in a ring. Interacts with the chaperonin GroEL.

The protein localises to the cytoplasm. Its function is as follows. Together with the chaperonin GroEL, plays an essential role in assisting protein folding. The GroEL-GroES system forms a nano-cage that allows encapsulation of the non-native substrate proteins and provides a physical environment optimized to promote and accelerate protein folding. GroES binds to the apical surface of the GroEL ring, thereby capping the opening of the GroEL channel. The sequence is that of Co-chaperonin GroES from Sulfurovum sp. (strain NBC37-1).